A 935-amino-acid chain; its full sequence is Kinesin heavy chain (935 aa).

In terms of domain architecture, Kinesin motor spans 5–329 (NIKVVCRFRP…LRFGARAKSI (325 aa)). Residues 87–94 (GQTGSGKT) and 237–244 (GSEKVGKT) contribute to the ATP site. A coiled-coil region spans residues 342–887 (AELKALLKKV…SQKSQNSLAA (546 aa)). Disordered regions lie at residues 400–419 (APGF…TPVP) and 898–935 (RGNG…MNSR).

The protein belongs to the TRAFAC class myosin-kinesin ATPase superfamily. Kinesin family. Kinesin subfamily.

It is found in the cytoplasm. It localises to the cytoskeleton. Functionally, kinesin is a microtubule-associated force-producing protein that may play a role in organelle transport. Its motor activity is directed toward the microtubule's plus end. The speed of this motor is 4-5 times faster than its animal counterparts. The chain is Kinesin heavy chain from Syncephalastrum racemosum (Filamentous fungus).